We begin with the raw amino-acid sequence, 463 residues long: ATP synthase subunit beta (463 aa).

153–160 (GGAGVGKT) is an ATP binding site.

It belongs to the ATPase alpha/beta chains family. F-type ATPases have 2 components, CF(1) - the catalytic core - and CF(0) - the membrane proton channel. CF(1) has five subunits: alpha(3), beta(3), gamma(1), delta(1), epsilon(1). CF(0) has three main subunits: a(1), b(2) and c(9-12). The alpha and beta chains form an alternating ring which encloses part of the gamma chain. CF(1) is attached to CF(0) by a central stalk formed by the gamma and epsilon chains, while a peripheral stalk is formed by the delta and b chains.

Its subcellular location is the cell inner membrane. It carries out the reaction ATP + H2O + 4 H(+)(in) = ADP + phosphate + 5 H(+)(out). Produces ATP from ADP in the presence of a proton gradient across the membrane. The catalytic sites are hosted primarily by the beta subunits. The protein is ATP synthase subunit beta of Burkholderia cepacia (Pseudomonas cepacia).